The primary structure comprises 209 residues: Imidazole glycerol phosphate synthase subunit HisH (209 aa).

Residues 5 to 209 (AIAIIDYDMG…LRNFVALVKD (205 aa)) enclose the Glutamine amidotransferase type-1 domain. Cys-83 functions as the Nucleophile in the catalytic mechanism. Residues His-188 and Glu-190 contribute to the active site.

In terms of assembly, heterodimer of HisH and HisF.

It is found in the cytoplasm. It catalyses the reaction 5-[(5-phospho-1-deoxy-D-ribulos-1-ylimino)methylamino]-1-(5-phospho-beta-D-ribosyl)imidazole-4-carboxamide + L-glutamine = D-erythro-1-(imidazol-4-yl)glycerol 3-phosphate + 5-amino-1-(5-phospho-beta-D-ribosyl)imidazole-4-carboxamide + L-glutamate + H(+). The enzyme catalyses L-glutamine + H2O = L-glutamate + NH4(+). Its pathway is amino-acid biosynthesis; L-histidine biosynthesis; L-histidine from 5-phospho-alpha-D-ribose 1-diphosphate: step 5/9. IGPS catalyzes the conversion of PRFAR and glutamine to IGP, AICAR and glutamate. The HisH subunit catalyzes the hydrolysis of glutamine to glutamate and ammonia as part of the synthesis of IGP and AICAR. The resulting ammonia molecule is channeled to the active site of HisF. This Thermosynechococcus vestitus (strain NIES-2133 / IAM M-273 / BP-1) protein is Imidazole glycerol phosphate synthase subunit HisH.